The primary structure comprises 426 residues: Cytochrome c biogenesis protein CcsB (426 aa).

3 helical membrane-spanning segments follow: residues 11-31 (LRVAIVLLFLIALASAVGTAI), 69-89 (SVWFLSLLAWLGLALILCSWR), and 159-179 (VGPLLVHTGLILLMLGAVWGV).

This sequence belongs to the Ccs1/CcsB family. In terms of assembly, may interact with CcsA.

The protein localises to the cellular thylakoid membrane. In terms of biological role, required during biogenesis of c-type cytochromes (cytochrome c6 and cytochrome f) at the step of heme attachment. The polypeptide is Cytochrome c biogenesis protein CcsB (Synechococcus sp. (strain CC9902)).